We begin with the raw amino-acid sequence, 251 residues long: HTH-type transcriptional regulator UlaR (251 aa).

The HTH deoR-type domain occupies 3–58 (EAQRHQILLEMLAQLGFVTVEKVVERLGISPATARRDINKLDESGKLKKVRNGAEA). Residues 20–39 (VTVEKVVERLGISPATARRD) constitute a DNA-binding region (H-T-H motif).

The protein localises to the cytoplasm. In terms of biological role, represses ulaG and the ulaABCDEF operon. This is HTH-type transcriptional regulator UlaR from Escherichia coli O139:H28 (strain E24377A / ETEC).